The sequence spans 191 residues: Cell division protein SepF (191 aa).

Over residues 151 to 165 (SSSPEEASPSSVPTE) the composition is skewed to low complexity. A disordered region spans residues 151 to 191 (SSSPEEASPSSVPTENTPQYSLGKNTTPEPAWGNSKLSAYS). Residues 166-178 (NTPQYSLGKNTTP) are compositionally biased toward polar residues.

This sequence belongs to the SepF family. Homodimer. Interacts with FtsZ.

The protein localises to the cytoplasm. Cell division protein that is part of the divisome complex and is recruited early to the Z-ring. Probably stimulates Z-ring formation, perhaps through the cross-linking of FtsZ protofilaments. Its function overlaps with FtsA. This chain is Cell division protein SepF, found in Prochlorococcus marinus (strain MIT 9215).